A 179-amino-acid polypeptide reads, in one-letter code: Large ribosomal subunit protein bL17 (179 aa).

Basic and acidic residues predominate over residues 123–161; it reads KEKDTKKKDDSKKSDDKKTSKKEAGFKSSKGESEHKKNT. The disordered stretch occupies residues 123 to 179; that stretch reads KEKDTKKKDDSKKSDDKKTSKKEAGFKSSKGESEHKKNTDQVVDSSSNRRYNRVKGS. A compositionally biased stretch (polar residues) spans 162-171; the sequence is DQVVDSSSNR.

It belongs to the bacterial ribosomal protein bL17 family. As to quaternary structure, part of the 50S ribosomal subunit. Contacts protein L32.

In Treponema denticola (strain ATCC 35405 / DSM 14222 / CIP 103919 / JCM 8153 / KCTC 15104), this protein is Large ribosomal subunit protein bL17.